Here is a 399-residue protein sequence, read N- to C-terminus: Elongation factor Tu (399 aa).

In terms of domain architecture, tr-type G spans 10–209 (KPHVNIGTIG…AVDSYIPTPV (200 aa)). Residues 19–26 (GHVDHGKT) are G1. A GTP-binding site is contributed by 19–26 (GHVDHGKT). T26 contacts Mg(2+). The tract at residues 60–64 (GITIA) is G2. The segment at 81–84 (DCPG) is G3. Residues 81–85 (DCPGH) and 136–139 (NKAD) each bind GTP. Residues 136–139 (NKAD) are G4. The segment at 174–176 (SAL) is G5.

Belongs to the TRAFAC class translation factor GTPase superfamily. Classic translation factor GTPase family. EF-Tu/EF-1A subfamily. As to quaternary structure, monomer.

The protein localises to the cytoplasm. The catalysed reaction is GTP + H2O = GDP + phosphate + H(+). In terms of biological role, GTP hydrolase that promotes the GTP-dependent binding of aminoacyl-tRNA to the A-site of ribosomes during protein biosynthesis. The protein is Elongation factor Tu of Campylobacter concisus (strain 13826).